The chain runs to 204 residues: Redox-sensing transcriptional repressor Rex 2 (204 aa).

Positions 17-53 (MYRKVLEATKKPYISSDEIARFLEINPDLVRKDFSYL) form a DNA-binding region, H-T-H motif.

Belongs to the transcriptional regulatory Rex family. Homodimer.

It is found in the cytoplasm. Functionally, modulates transcription in response to changes in cellular NADH/NAD(+) redox state. In Thermotoga maritima (strain ATCC 43589 / DSM 3109 / JCM 10099 / NBRC 100826 / MSB8), this protein is Redox-sensing transcriptional repressor Rex 2 (rex2).